Here is a 396-residue protein sequence, read N- to C-terminus: Putative ribosomal RNA large subunit methyltransferase YwbD (396 aa).

In terms of domain architecture, PUA spans 1–79 (MKLLTLKKAH…KHEQIDQAFF (79 aa)).

This sequence belongs to the methyltransferase superfamily. RlmI family.

Its subcellular location is the cytoplasm. In Bacillus subtilis (strain 168), this protein is Putative ribosomal RNA large subunit methyltransferase YwbD (ywbD).